A 277-amino-acid chain; its full sequence is Co-chaperone protein DjlA (277 aa).

Residues 1–6 (MRYWGK) lie on the Periplasmic side of the membrane. The helical transmembrane segment at 7–31 (LLGLVLGVMYAPGVVGALLGLLVGH) threads the bilayer. Over 32 to 277 (MVDRALGAKR…DLIKREKGFK (246 aa)) the chain is Cytoplasmic. The J domain maps to 211–277 (DACKVLGVNS…DLIKREKGFK (67 aa)).

As to quaternary structure, homodimer.

It localises to the cell inner membrane. Functionally, regulatory DnaK co-chaperone. Direct interaction between DnaK and DjlA is needed for the induction of the wcaABCDE operon, involved in the synthesis of a colanic acid polysaccharide capsule, possibly through activation of the RcsB/RcsC phosphotransfer signaling pathway. The colanic acid capsule may help the bacterium survive conditions outside the host. In Yersinia pestis, this protein is Co-chaperone protein DjlA.